The sequence spans 267 residues: Neutrophil elastase (267 aa).

The N-terminal stretch at 1–27 is a signal peptide; that stretch reads MTLGRRLACLFLACVLPALLLGGTALA. Positions 28 to 29 are excised as a propeptide; that stretch reads SE. The region spanning 30–247 is the Peptidase S1 domain; it reads IVGGRRARPH…FVNWIDSIIQ (218 aa). C55 and C71 are disulfide-bonded. The active-site Charge relay system is H70. N-linked (GlcNAc...) asparagine glycosylation occurs at N88. The Charge relay system role is filled by D117. 2 N-linked (GlcNAc...) asparagine glycosylation sites follow: N124 and N173. 3 disulfide bridges follow: C151-C208, C181-C187, and C198-C223. S202 serves as the catalytic Charge relay system.

The protein belongs to the peptidase S1 family. Elastase subfamily. As to quaternary structure, interacts with NOTCH2NL. Interacts with agaphelin, an antihemostatic protein from Anopheles gambiae. In terms of tissue distribution, bone marrow cells. Neutrophil.

It is found in the cytoplasmic vesicle. The protein resides in the phagosome. It catalyses the reaction Hydrolysis of proteins, including elastin. Preferential cleavage: Val-|-Xaa &gt; Ala-|-Xaa.. In terms of biological role, serine protease that modifies the functions of natural killer cells, monocytes and granulocytes. Inhibits C5a-dependent neutrophil enzyme release and chemotaxis. Promotes cleavage of GSDMB, thereby inhibiting pyroptosis. Promotes blood coagulation. Through the activation of the platelet fibrinogen receptor integrin alpha-IIb/beta-3, potentiates platelet aggregation induced by a threshold concentration of cathepsin G (CTSG). Cleaves and thus inactivates tissue factor pathway inhibitor (TFPI). Capable of killing E.coli but not S.aureus in vitro; digests outer membrane protein A (ompA) in E.coli and K.pneumoniae. This chain is Neutrophil elastase (ELANE), found in Homo sapiens (Human).